The primary structure comprises 69 residues: DNA gyrase inhibitor YacG (69 aa).

Cysteine 14, cysteine 17, cysteine 33, and cysteine 37 together coordinate Zn(2+). A disordered region spans residues 46-69 (ADEEKSIPGAPDMSDSDGWSEDQY). Over residues 59–69 (SDSDGWSEDQY) the composition is skewed to acidic residues.

It belongs to the DNA gyrase inhibitor YacG family. Interacts with GyrB. Requires Zn(2+) as cofactor.

Functionally, inhibits all the catalytic activities of DNA gyrase by preventing its interaction with DNA. Acts by binding directly to the C-terminal domain of GyrB, which probably disrupts DNA binding by the gyrase. This is DNA gyrase inhibitor YacG from Aliivibrio fischeri (strain ATCC 700601 / ES114) (Vibrio fischeri).